The following is a 441-amino-acid chain: Proline--tRNA ligase (441 aa).

Belongs to the class-II aminoacyl-tRNA synthetase family. ProS type 2 subfamily. As to quaternary structure, homodimer.

It localises to the cytoplasm. The enzyme catalyses tRNA(Pro) + L-proline + ATP = L-prolyl-tRNA(Pro) + AMP + diphosphate. Catalyzes the attachment of proline to tRNA(Pro) in a two-step reaction: proline is first activated by ATP to form Pro-AMP and then transferred to the acceptor end of tRNA(Pro). This chain is Proline--tRNA ligase, found in Methylorubrum extorquens (strain PA1) (Methylobacterium extorquens).